The sequence spans 1448 residues: Gag-Pol polyprotein (1448 aa).

A lipid anchor (N-myristoyl glycine; by host) is attached at Gly-2. The short motif at Trp-16–Arg-22 is the Nuclear export signal element. The short motif at Lys-26 to Lys-32 is the Nuclear localization signal element. The span at Lys-107 to Glu-116 shows a compositional bias: basic and acidic residues. Positions Lys-107–Ser-129 are disordered. The span at Glu-118–Glu-128 shows a compositional bias: low complexity. A Phosphotyrosine; by host modification is found at Tyr-135. 2 consecutive CCHC-type zinc fingers follow at residues Ile-393–Ala-410 and Lys-414–Ser-431. Composition is skewed to basic and acidic residues over residues Arg-446–Ala-460 and Gly-473–Leu-490. Positions Arg-446–Leu-490 are disordered. Positions Lys-517 to Phe-586 constitute a Peptidase A2 domain. Asp-522 functions as the For protease activity; shared with dimeric partner in the catalytic mechanism. The 191-residue stretch at Glu-640–Leu-830 folds into the Reverse transcriptase domain. The Mg(2+) site is built by Asp-706, Asp-781, and Asp-782. The RT 'primer grip' stretch occupies residues Phe-823 to His-831. Residues Trp-994–Trp-1010 carry the Tryptophan repeat motif motif. Residues Ile-1030–Arg-1153 form the RNase H type-1 domain. Residues Asp-1039, Glu-1074, Asp-1094, and Asp-1145 each coordinate Mg(2+). Residues Asp-1159–Gln-1200 form an Integrase-type zinc finger. 4 residues coordinate Zn(2+): His-1168, His-1172, Cys-1196, and Cys-1199. In terms of domain architecture, Integrase catalytic spans Ile-1210–Ile-1360. Mg(2+) is bound by residues Asp-1220 and Asp-1272. The integrase-type DNA-binding region spans Phe-1379 to Asp-1426.

In terms of assembly, homotrimer. Interacts with gp41 (via C-terminus). As to quaternary structure, homodimer. The active site consists of two apposed aspartic acid residues. Heterodimer of p66 RT and p51 RT (RT p66/p51). Heterodimerization of RT is essential for DNA polymerase activity. Despite the sequence identities, p66 RT and p51 RT have distinct folding. In terms of assembly, homotetramer; may further associate as a homohexadecamer. The cofactor is Mg(2+). In terms of processing, specific enzymatic cleavages by the viral protease yield mature proteins. The protease is released by autocatalytic cleavage. The polyprotein is cleaved during and after budding, this process is termed maturation. Proteolytic cleavage of p66 RT removes the RNase H domain to yield the p51 RT subunit. Capsid protein p24 is phosphorylated.

Its subcellular location is the virion. The protein localises to the host nucleus. It is found in the host cytoplasm. It localises to the host cell membrane. The catalysed reaction is Specific for a P1 residue that is hydrophobic, and P1' variable, but often Pro.. It catalyses the reaction Endohydrolysis of RNA in RNA/DNA hybrids. Three different cleavage modes: 1. sequence-specific internal cleavage of RNA. Human immunodeficiency virus type 1 and Moloney murine leukemia virus enzymes prefer to cleave the RNA strand one nucleotide away from the RNA-DNA junction. 2. RNA 5'-end directed cleavage 13-19 nucleotides from the RNA end. 3. DNA 3'-end directed cleavage 15-20 nucleotides away from the primer terminus.. The enzyme catalyses 3'-end directed exonucleolytic cleavage of viral RNA-DNA hybrid.. It carries out the reaction DNA(n) + a 2'-deoxyribonucleoside 5'-triphosphate = DNA(n+1) + diphosphate. The viral protease is inhibited by many synthetic protease inhibitors (PIs), such as amprenavir, atazanavir, indinavir, loprinavir, nelfinavir, ritonavir and saquinavir. RT can be inhibited either by nucleoside RT inhibitors (NRTIs) or by non nucleoside RT inhibitors (NNRTIs). NRTIs act as chain terminators, whereas NNRTIs inhibit DNA polymerization by binding a small hydrophobic pocket near the RT active site and inducing an allosteric change in this region. Classical NRTIs are abacavir, adefovir (PMEA), didanosine (ddI), lamivudine (3TC), stavudine (d4T), tenofovir (PMPA), zalcitabine (ddC), and zidovudine (AZT). Classical NNRTIs are atevirdine (BHAP U-87201E), delavirdine, efavirenz (DMP-266), emivirine (I-EBU), and nevirapine (BI-RG-587). The tritherapies used as a basic effective treatment of AIDS associate two NRTIs and one NNRTI. Use of protease inhibitors in tritherapy regimens permit more ambitious therapeutic strategies. In terms of biological role, gag-Pol polyprotein and Gag polyprotein may regulate their own translation, by the binding genomic RNA in the 5'-UTR. At low concentration, Gag-Pol and Gag would promote translation, whereas at high concentration, the polyproteins encapsidate genomic RNA and then shut off translation. Its function is as follows. Matrix protein p17 has two main functions: in infected cell, it targets Gag and Gag-pol polyproteins to the plasma membrane via a multipartite membrane-binding signal, that includes its myristointegration complex. The myristoylation signal and the NLS exert conflicting influences its subcellular localization. The key regulation of these motifs might be phosphorylation of a portion of MA molecules on the C-terminal tyrosine at the time of virus maturation, by virion-associated cellular tyrosine kinase. Implicated in the release from host cell mediated by Vpu. Functionally, capsid protein p24 forms the conical core that encapsulates the genomic RNA-nucleocapsid complex in the virion. The core is constituted by capsid protein hexamer subunits. The core is disassembled soon after virion entry. Interaction with host PPIA/CYPA protects the virus from restriction by host TRIM5-alpha and from an unknown antiviral activity in host cells. This capsid restriction by TRIM5 is one of the factors which restricts SIV to the simian species. Nucleocapsid protein p7 encapsulates and protects viral dimeric unspliced (genomic) RNA. Binds these RNAs through its zinc fingers. Facilitates rearangement of nucleic acid secondary structure during retrotranscription of genomic RNA. This capability is referred to as nucleic acid chaperone activity. In terms of biological role, the aspartyl protease mediates proteolytic cleavages of Gag and Gag-Pol polyproteins during or shortly after the release of the virion from the plasma membrane. Cleavages take place as an ordered, step-wise cascade to yield mature proteins. This process is called maturation. Displays maximal activity during the budding process just prior to particle release from the cell. Also cleaves Nef and Vif, probably concomitantly with viral structural proteins on maturation of virus particles. Hydrolyzes host EIF4GI and PABP1 in order to shut off the capped cellular mRNA translation. The resulting inhibition of cellular protein synthesis serves to ensure maximal viral gene expression and to evade host immune response. Its function is as follows. Reverse transcriptase/ribonuclease H (RT) is a multifunctional enzyme that converts the viral dimeric RNA genome into dsDNA in the cytoplasm, shortly after virus entry into the cell. This enzyme displays a DNA polymerase activity that can copy either DNA or RNA templates, and a ribonuclease H (RNase H) activity that cleaves the RNA strand of RNA-DNA heteroduplexes in a partially processive 3' to 5' endonucleasic mode. Conversion of viral genomic RNA into dsDNA requires many steps. A tRNA binds to the primer-binding site (PBS) situated at the 5'-end of the viral RNA. RT uses the 3' end of the tRNA primer to perform a short round of RNA-dependent minus-strand DNA synthesis. The reading proceeds through the U5 region and ends after the repeated (R) region which is present at both ends of viral RNA. The portion of the RNA-DNA heteroduplex is digested by the RNase H, resulting in a ssDNA product attached to the tRNA primer. This ssDNA/tRNA hybridizes with the identical R region situated at the 3' end of viral RNA. This template exchange, known as minus-strand DNA strong stop transfer, can be either intra- or intermolecular. RT uses the 3' end of this newly synthesized short ssDNA to perform the RNA-dependent minus-strand DNA synthesis of the whole template. RNase H digests the RNA template except for two polypurine tracts (PPTs) situated at the 5'-end and near the center of the genome. It is not clear if both polymerase and RNase H activities are simultaneous. RNase H can probably proceed both in a polymerase-dependent (RNA cut into small fragments by the same RT performing DNA synthesis) and a polymerase-independent mode (cleavage of remaining RNA fragments by free RTs). Secondly, RT performs DNA-directed plus-strand DNA synthesis using the PPTs that have not been removed by RNase H as primers. PPTs and tRNA primers are then removed by RNase H. The 3' and 5' ssDNA PBS regions hybridize to form a circular dsDNA intermediate. Strand displacement synthesis by RT to the PBS and PPT ends produces a blunt ended, linear dsDNA copy of the viral genome that includes long terminal repeats (LTRs) at both ends. Functionally, integrase catalyzes viral DNA integration into the host chromosome, by performing a series of DNA cutting and joining reactions. This enzyme activity takes place after virion entry into a cell and reverse transcription of the RNA genome in dsDNA. The first step in the integration process is 3' processing. This step requires a complex comprising the viral genome, matrix protein, Vpr and integrase. This complex is called the pre-integration complex (PIC). The integrase protein removes 2 nucleotides from each 3' end of the viral DNA, leaving recessed CA OH's at the 3' ends. In the second step, the PIC enters cell nucleus. This process is mediated through integrase and Vpr proteins, and allows the virus to infect a non dividing cell. This ability to enter the nucleus is specific of lentiviruses, other retroviruses cannot and rely on cell division to access cell chromosomes. In the third step, termed strand transfer, the integrase protein joins the previously processed 3' ends to the 5' ends of strands of target cellular DNA at the site of integration. The 5'-ends are produced by integrase-catalyzed staggered cuts, 5 bp apart. A Y-shaped, gapped, recombination intermediate results, with the 5'-ends of the viral DNA strands and the 3' ends of target DNA strands remaining unjoined, flanking a gap of 5 bp. The last step is viral DNA integration into host chromosome. This involves host DNA repair synthesis in which the 5 bp gaps between the unjoined strands are filled in and then ligated. Since this process occurs at both cuts flanking the SIV genome, a 5 bp duplication of host DNA is produced at the ends of SIV integration. Alternatively, Integrase may catalyze the excision of viral DNA just after strand transfer, this is termed disintegration. This is Gag-Pol polyprotein (gag-pol) from Pan troglodytes (Chimpanzee).